Reading from the N-terminus, the 131-residue chain is uncharacterized protein (131 aa).

This is an uncharacterized protein from Rickettsia conorii (strain ATCC VR-613 / Malish 7).